The sequence spans 418 residues: Pigment epithelium-derived factor (418 aa).

The first 19 residues, 1–19 (MQALVLLLCIGALLGHSSC), serve as a signal peptide directing secretion. Residue Gln-20 is modified to Pyrrolidone carboxylic acid. The tract at residues 20–39 (QNPASPPEEGSPDPDSTGAL) is disordered. Ser-24 and Ser-114 each carry phosphoserine; by CK2. Ser-227 is subject to Phosphoserine; by PKA. An N-linked (GlcNAc...) (complex) asparagine glycan is attached at Asn-285. The interval 371 to 383 (TTPSPGLQPAHLT) is O-glycosylated at one site.

Belongs to the serpin family. As to quaternary structure, interacts with PNPLA2; this interaction stimulates the phospholipase A2 activity of PNPLA2. The N-terminus is blocked. Extracellular phosphorylation enhances antiangiogenic activity. In terms of processing, N- and O-glycosylated. O-glycosylated with a core 1 or possibly core 8 glycan. As to expression, retinal pigment epithelial cells and blood plasma.

It is found in the secreted. The protein resides in the melanosome. Neurotrophic protein; induces extensive neuronal differentiation in retinoblastoma cells. Potent inhibitor of angiogenesis. As it does not undergo the S (stressed) to R (relaxed) conformational transition characteristic of active serpins, it exhibits no serine protease inhibitory activity. The sequence is that of Pigment epithelium-derived factor (SERPINF1) from Homo sapiens (Human).